Reading from the N-terminus, the 373-residue chain is Chaperone protein DnaJ (373 aa).

Residues 5–70 (DFYATLGVAR…EKRAMYDQYG (66 aa)) enclose the J domain. The segment at 134–212 (GVKKRINIPT…CRGAGRNKAV (79 aa)) adopts a CR-type zinc-finger fold. 8 residues coordinate Zn(2+): cysteine 147, cysteine 150, cysteine 164, cysteine 167, cysteine 186, cysteine 189, cysteine 200, and cysteine 203. CXXCXGXG motif repeat units lie at residues 147–154 (CDVCNGSG), 164–171 (CPTCKGSG), 186–193 (CPTCHGAG), and 200–207 (CVKCRGAG).

The protein belongs to the DnaJ family. Homodimer. Zn(2+) serves as cofactor.

The protein localises to the cytoplasm. Functionally, participates actively in the response to hyperosmotic and heat shock by preventing the aggregation of stress-denatured proteins and by disaggregating proteins, also in an autonomous, DnaK-independent fashion. Unfolded proteins bind initially to DnaJ; upon interaction with the DnaJ-bound protein, DnaK hydrolyzes its bound ATP, resulting in the formation of a stable complex. GrpE releases ADP from DnaK; ATP binding to DnaK triggers the release of the substrate protein, thus completing the reaction cycle. Several rounds of ATP-dependent interactions between DnaJ, DnaK and GrpE are required for fully efficient folding. Also involved, together with DnaK and GrpE, in the DNA replication of plasmids through activation of initiation proteins. In Neisseria meningitidis serogroup C (strain 053442), this protein is Chaperone protein DnaJ.